The sequence spans 842 residues: Histidine biosynthesis trifunctional protein (842 aa).

Positions 1-275 (MTFPLLPAYA…FVVEQTGVGF (275 aa)) are phosphoribosyl-AMP cyclohydrolase. The segment at 276–357 (CHLERTSCFG…FYFALVRCAK (82 aa)) is phosphoribosyl-ATP pyrophosphohydrolase. The segment at 358–842 (YGVTLDEVER…KVRMEKLGLI (485 aa)) is histidinol dehydrogenase. The segment at 380–403 (KGDAKPGYTKEQPKEESKPKEVPS) is disordered. Over residues 390–403 (EQPKEESKPKEVPS) the composition is skewed to basic and acidic residues. Positions 667 and 670 each coordinate Zn(2+). Residues Glu-736 and His-737 contribute to the active site. The Zn(2+) site is built by Asp-769 and His-828.

It in the C-terminal section; belongs to the histidinol dehydrogenase family. Zn(2+) serves as cofactor.

The catalysed reaction is 1-(5-phospho-beta-D-ribosyl)-5'-AMP + H2O = 1-(5-phospho-beta-D-ribosyl)-5-[(5-phospho-beta-D-ribosylamino)methylideneamino]imidazole-4-carboxamide. It catalyses the reaction 1-(5-phospho-beta-D-ribosyl)-ATP + H2O = 1-(5-phospho-beta-D-ribosyl)-5'-AMP + diphosphate + H(+). It carries out the reaction L-histidinol + 2 NAD(+) + H2O = L-histidine + 2 NADH + 3 H(+). Its pathway is amino-acid biosynthesis; L-histidine biosynthesis; L-histidine from 5-phospho-alpha-D-ribose 1-diphosphate: step 2/9. It participates in amino-acid biosynthesis; L-histidine biosynthesis; L-histidine from 5-phospho-alpha-D-ribose 1-diphosphate: step 3/9. It functions in the pathway amino-acid biosynthesis; L-histidine biosynthesis; L-histidine from 5-phospho-alpha-D-ribose 1-diphosphate: step 9/9. This is Histidine biosynthesis trifunctional protein (HIS4) from Komagataella pastoris (Yeast).